The following is a 525-amino-acid chain: Glutamate--cysteine ligase (525 aa).

Belongs to the glutamate--cysteine ligase type 1 family. Type 1 subfamily.

It carries out the reaction L-cysteine + L-glutamate + ATP = gamma-L-glutamyl-L-cysteine + ADP + phosphate + H(+). It participates in sulfur metabolism; glutathione biosynthesis; glutathione from L-cysteine and L-glutamate: step 1/2. This Hahella chejuensis (strain KCTC 2396) protein is Glutamate--cysteine ligase.